The sequence spans 155 residues: Ribosome maturation factor RimP (155 aa).

This sequence belongs to the RimP family.

It is found in the cytoplasm. Functionally, required for maturation of 30S ribosomal subunits. The polypeptide is Ribosome maturation factor RimP (Hamiltonella defensa subsp. Acyrthosiphon pisum (strain 5AT)).